A 274-amino-acid polypeptide reads, in one-letter code: Large ribosomal subunit protein uL2 (274 aa).

Disordered stretches follow at residues 28 to 54 and 224 to 274; these read APHA…TRHI and VAMN…RRRK. A compositionally biased stretch (basic and acidic residues) spans 263–274; sequence KRTDKMIVRRRK.

This sequence belongs to the universal ribosomal protein uL2 family. Part of the 50S ribosomal subunit. Forms a bridge to the 30S subunit in the 70S ribosome.

In terms of biological role, one of the primary rRNA binding proteins. Required for association of the 30S and 50S subunits to form the 70S ribosome, for tRNA binding and peptide bond formation. It has been suggested to have peptidyltransferase activity; this is somewhat controversial. Makes several contacts with the 16S rRNA in the 70S ribosome. The chain is Large ribosomal subunit protein uL2 from Pseudomonas fluorescens (strain SBW25).